A 304-amino-acid polypeptide reads, in one-letter code: Non-specific ribonucleoside hydrolase RihC (304 aa).

His233 is an active-site residue.

Belongs to the IUNH family. RihC subfamily.

Hydrolyzes both purine and pyrimidine ribonucleosides with a broad-substrate specificity. The protein is Non-specific ribonucleoside hydrolase RihC of Escherichia coli O157:H7.